Consider the following 288-residue polypeptide: Homoserine kinase (288 aa).

79-89 contributes to the ATP binding site; it reads PPARGLGSSSA.

Belongs to the GHMP kinase family. Homoserine kinase subfamily.

Its subcellular location is the cytoplasm. The catalysed reaction is L-homoserine + ATP = O-phospho-L-homoserine + ADP + H(+). It functions in the pathway amino-acid biosynthesis; L-threonine biosynthesis; L-threonine from L-aspartate: step 4/5. Its function is as follows. Catalyzes the ATP-dependent phosphorylation of L-homoserine to L-homoserine phosphate. This is Homoserine kinase from Listeria monocytogenes serotype 4b (strain CLIP80459).